The following is a 149-amino-acid chain: Deoxyuridine 5'-triphosphate nucleotidohydrolase (149 aa).

Substrate is bound by residues Arg-68 to Gly-70, Asn-81, and Leu-85 to Asp-87.

It belongs to the dUTPase family. Mg(2+) is required as a cofactor.

The catalysed reaction is dUTP + H2O = dUMP + diphosphate + H(+). Its pathway is pyrimidine metabolism; dUMP biosynthesis; dUMP from dCTP (dUTP route): step 2/2. In terms of biological role, this enzyme is involved in nucleotide metabolism: it produces dUMP, the immediate precursor of thymidine nucleotides and it decreases the intracellular concentration of dUTP so that uracil cannot be incorporated into DNA. This Aromatoleum aromaticum (strain DSM 19018 / LMG 30748 / EbN1) (Azoarcus sp. (strain EbN1)) protein is Deoxyuridine 5'-triphosphate nucleotidohydrolase.